The following is a 414-amino-acid chain: MPKYELQETLASGSTSKVKRAAAPGNAKCVVKVIRKKDVPLRVFLREVKIHRSLRHPNIVGFVDSYEDCHGYCIVMKLGCGEVGSMIRAGGGLDPLLAHFYFRQLVSAVEYLHGKCICHRDIKPENMLIDSAGNLLLSDFGFSTVFFHKGRRRRLRSPAGSLEYMAPEVFEGAYDGELADVWSCGVSLVVFLTGALPWDRAVESDERFSAFVSSRGGCQVPLSSIGDQAMGLVMRMTAKEDRRPSVSTVMKDPWVMQPNELLDESGLCRDSCRLFSLVPRQTGSALHFTQPGEVHKTPRTRPVSSQPRRAGSGDICRVYIGEESLRLALRRVCEALDGMVVSHRIAKEHVMFSTVDSRRSVLSGEVGVIRLDEGCCMTIRRAKGDPQEFKRFTRVLAESLGCNGRKCTILYNEI.

Positions 4 to 255 (YELQETLASG…VSTVMKDPWV (252 aa)) constitute a Protein kinase domain. Residues 10–18 (LASGSTSKV) and Lys-32 contribute to the ATP site. The active-site Proton acceptor is Asp-121. The tract at residues 291–310 (PGEVHKTPRTRPVSSQPRRA) is disordered.

This sequence belongs to the protein kinase superfamily. CAMK Ser/Thr protein kinase family. NIM1 subfamily.

It localises to the nucleus. The catalysed reaction is L-seryl-[protein] + ATP = O-phospho-L-seryl-[protein] + ADP + H(+). It carries out the reaction L-threonyl-[protein] + ATP = O-phospho-L-threonyl-[protein] + ADP + H(+). Its function is as follows. Serine/threonine-protein kinase which is required for checkpoint-mediated cell cycle arrest and activation of DNA repair in response to the presence of DNA damage or unreplicated DNA. May also negatively regulate cell cycle progression during unperturbed cell cycles. In Encephalitozoon cuniculi (strain GB-M1) (Microsporidian parasite), this protein is Probable serine/threonine-protein kinase CHK1 homolog (CHK1).